Reading from the N-terminus, the 368-residue chain is Phosphoserine aminotransferase (368 aa).

An L-glutamate-binding site is contributed by arginine 42. Pyridoxal 5'-phosphate contacts are provided by tryptophan 101, threonine 151, aspartate 175, and glutamine 198. Residue lysine 199 is modified to N6-(pyridoxal phosphate)lysine. Asparagine 240–threonine 241 contributes to the pyridoxal 5'-phosphate binding site.

The protein belongs to the class-V pyridoxal-phosphate-dependent aminotransferase family. SerC subfamily. As to quaternary structure, homodimer. Pyridoxal 5'-phosphate is required as a cofactor.

The protein localises to the cytoplasm. It catalyses the reaction O-phospho-L-serine + 2-oxoglutarate = 3-phosphooxypyruvate + L-glutamate. The catalysed reaction is 4-(phosphooxy)-L-threonine + 2-oxoglutarate = (R)-3-hydroxy-2-oxo-4-phosphooxybutanoate + L-glutamate. The protein operates within amino-acid biosynthesis; L-serine biosynthesis; L-serine from 3-phospho-D-glycerate: step 2/3. Its pathway is cofactor biosynthesis; pyridoxine 5'-phosphate biosynthesis; pyridoxine 5'-phosphate from D-erythrose 4-phosphate: step 3/5. In terms of biological role, catalyzes the reversible conversion of 3-phosphohydroxypyruvate to phosphoserine and of 3-hydroxy-2-oxo-4-phosphonooxybutanoate to phosphohydroxythreonine. The protein is Phosphoserine aminotransferase of Polaromonas sp. (strain JS666 / ATCC BAA-500).